Consider the following 600-residue polypeptide: NADH-quinone oxidoreductase subunit C/D (600 aa).

Residues 1 to 190 (MVNNMTDLTA…DPFELTKAKQ (190 aa)) form an NADH dehydrogenase I subunit C region. The interval 214–600 (DFMFLNLGPN…IDFVMSDVDR (387 aa)) is NADH dehydrogenase I subunit D.

This sequence in the N-terminal section; belongs to the complex I 30 kDa subunit family. The protein in the C-terminal section; belongs to the complex I 49 kDa subunit family. In terms of assembly, NDH-1 is composed of 13 different subunits. Subunits NuoB, CD, E, F, and G constitute the peripheral sector of the complex.

It is found in the cell inner membrane. The catalysed reaction is a quinone + NADH + 5 H(+)(in) = a quinol + NAD(+) + 4 H(+)(out). Its function is as follows. NDH-1 shuttles electrons from NADH, via FMN and iron-sulfur (Fe-S) centers, to quinones in the respiratory chain. The immediate electron acceptor for the enzyme in this species is believed to be ubiquinone. Couples the redox reaction to proton translocation (for every two electrons transferred, four hydrogen ions are translocated across the cytoplasmic membrane), and thus conserves the redox energy in a proton gradient. The sequence is that of NADH-quinone oxidoreductase subunit C/D from Salmonella arizonae (strain ATCC BAA-731 / CDC346-86 / RSK2980).